A 147-amino-acid chain; its full sequence is 3-dehydroquinate dehydratase (147 aa).

The Proton acceptor role is filled by Tyr23. 3 residues coordinate substrate: Asn75, His81, and Asp88. The active-site Proton donor is the His101. Substrate is bound by residues 102 to 103 and Arg112; that span reads LS.

This sequence belongs to the type-II 3-dehydroquinase family. As to quaternary structure, homododecamer.

The catalysed reaction is 3-dehydroquinate = 3-dehydroshikimate + H2O. It participates in metabolic intermediate biosynthesis; chorismate biosynthesis; chorismate from D-erythrose 4-phosphate and phosphoenolpyruvate: step 3/7. Functionally, catalyzes a trans-dehydration via an enolate intermediate. This chain is 3-dehydroquinate dehydratase, found in Nitrosococcus oceani (strain ATCC 19707 / BCRC 17464 / JCM 30415 / NCIMB 11848 / C-107).